The following is a 206-amino-acid chain: Large ribosomal subunit protein uL22m (206 aa).

A mitochondrion-targeting transit peptide spans 1–40 (MAAALLRELGALWVPNLRIWTTQMLRVLPQSCIHTSTSLD).

The protein belongs to the universal ribosomal protein uL22 family. As to quaternary structure, component of the mitochondrial ribosome large subunit (39S) which comprises a 16S rRNA and about 50 distinct proteins.

Its subcellular location is the mitochondrion. The sequence is that of Large ribosomal subunit protein uL22m (Mrpl22) from Rattus norvegicus (Rat).